The sequence spans 59 residues: Large ribosomal subunit protein bL32 (59 aa).

A compositionally biased stretch (basic residues) spans 1-16 (MAVPKRKTSPSKRGMR). Residues 1-41 (MAVPKRKTSPSKRGMRRSADALKAPTYIEDKNSGELRRPHH) form a disordered region. A compositionally biased stretch (basic and acidic residues) spans 28-41 (IEDKNSGELRRPHH).

This sequence belongs to the bacterial ribosomal protein bL32 family.

The polypeptide is Large ribosomal subunit protein bL32 (Bartonella henselae (strain ATCC 49882 / DSM 28221 / CCUG 30454 / Houston 1) (Rochalimaea henselae)).